A 596-amino-acid polypeptide reads, in one-letter code: Elongation factor 4 (596 aa).

Residues 2–184 (RNIRNFSIIA…AIVHRIPPPK (183 aa)) form the tr-type G domain. GTP-binding positions include 14-19 (DHGKST) and 131-134 (NKID).

The protein belongs to the TRAFAC class translation factor GTPase superfamily. Classic translation factor GTPase family. LepA subfamily.

Its subcellular location is the cell inner membrane. It catalyses the reaction GTP + H2O = GDP + phosphate + H(+). Required for accurate and efficient protein synthesis under certain stress conditions. May act as a fidelity factor of the translation reaction, by catalyzing a one-codon backward translocation of tRNAs on improperly translocated ribosomes. Back-translocation proceeds from a post-translocation (POST) complex to a pre-translocation (PRE) complex, thus giving elongation factor G a second chance to translocate the tRNAs correctly. Binds to ribosomes in a GTP-dependent manner. The chain is Elongation factor 4 from Xanthomonas euvesicatoria pv. vesicatoria (strain 85-10) (Xanthomonas campestris pv. vesicatoria).